Here is a 329-residue protein sequence, read N- to C-terminus: Ribosomal RNA small subunit methyltransferase C (329 aa).

The protein belongs to the methyltransferase superfamily. RsmC family. As to quaternary structure, monomer.

Its subcellular location is the cytoplasm. The enzyme catalyses guanosine(1207) in 16S rRNA + S-adenosyl-L-methionine = N(2)-methylguanosine(1207) in 16S rRNA + S-adenosyl-L-homocysteine + H(+). Specifically methylates the guanine in position 1207 of 16S rRNA in the 30S particle. The sequence is that of Ribosomal RNA small subunit methyltransferase C from Haemophilus ducreyi (strain 35000HP / ATCC 700724).